The sequence spans 400 residues: Endoglucanase 5A (400 aa).

The N-terminal stretch at Met-1–Ala-26 is a signal peptide. Substrate is bound by residues His-61, Trp-65–Tyr-66, Tyr-92, and His-127. Glu-165 (proton donor) is an active-site residue. Residue Tyr-228 coordinates substrate. Residue Glu-254 is the Nucleophile of the active site. Residues Ala-260–Thr-261, Trp-288, and Lys-293–Glu-295 each bind substrate. The disordered stretch occupies residues Glu-328 to Asn-363. The segment covering Pro-334 to Asp-353 has biased composition (pro residues). The Chitin-binding type-3 domain occupies Tyr-357–Trp-396.

The protein belongs to the glycosyl hydrolase 5 (cellulase A) family. Monomer.

The protein localises to the secreted. The enzyme catalyses Endohydrolysis of (1-&gt;4)-beta-D-glucosidic linkages in cellulose, lichenin and cereal beta-D-glucans.. This is Endoglucanase 5A (cel5A) from Salipaludibacillus agaradhaerens (Bacillus agaradhaerens).